A 349-amino-acid polypeptide reads, in one-letter code: Protein RecA (349 aa).

65–72 (GPESSGKT) is a binding site for ATP.

Belongs to the RecA family.

Its subcellular location is the cytoplasm. Functionally, can catalyze the hydrolysis of ATP in the presence of single-stranded DNA, the ATP-dependent uptake of single-stranded DNA by duplex DNA, and the ATP-dependent hybridization of homologous single-stranded DNAs. It interacts with LexA causing its activation and leading to its autocatalytic cleavage. The chain is Protein RecA from Acinetobacter baumannii (strain AB307-0294).